The primary structure comprises 514 residues: Triacylglyceride transporter MAB_2807 (514 aa).

11 consecutive transmembrane segments (helical) span residues 19–39 (IAIG…YVVV), 58–78 (QVTP…PLLG), 88–108 (LILQ…ALST), 118–138 (VIQG…GADL), 157–177 (LGSV…GSWT), 178–198 (AIFW…QFSV), 210–230 (VDVV…VGLY), 239–259 (LPEW…AFIL), 278–298 (PFFA…VTLV), 316–336 (VFLL…GGWL), and 344–364 (IIAV…SGWP). The interval 371 to 380 (VHNFGFFTLP) is beta-hairpin. 3 consecutive transmembrane segments (helical) span residues 385–405 (DLVV…SAAL), 420–440 (VVVA…GWGI), and 485–505 (MFAI…FVGS).

It belongs to the major facilitator superfamily. P55 (TC 2.A.1.3.34) family.

Its subcellular location is the cell inner membrane. In terms of biological role, in association with lipoprotein LprG probably transports triacyglycerides (TAG) across the inner cell membrane into the periplasm; TAG probably regulates lipid metabolism and growth regulation and plays a structural role in the outer membrane. TAG (and maybe other lipids) enters the central cavity of the P55 transporter from within the cell inner membrane via clefts on the cytoplasmic face of P55 between TM5-TM8 and TM2-TM11. From there the lipid is probably transferred to the hydrophobic cavity of LprG. Involved in drug susceptibilty, its expression partially complements the antibiotic susceptibilty of a double lprG-mfs deletion. Probably does not function as a bona fide drug efflux pump, but instead plays a role in outer membrane biogenesis. Probably required with LprG for normal surface localization of lipoarabinomannan (LAM). The sequence is that of Triacylglyceride transporter MAB_2807 from Mycobacteroides abscessus (strain ATCC 19977 / DSM 44196 / CCUG 20993 / CIP 104536 / JCM 13569 / NCTC 13031 / TMC 1543 / L948) (Mycobacterium abscessus).